The chain runs to 304 residues: 4-diphosphocytidyl-2-C-methyl-D-erythritol kinase (304 aa).

Lysine 18 is a catalytic residue. 103-113 (PVAAGIGGGSA) is a binding site for ATP. The active site involves aspartate 145.

It belongs to the GHMP kinase family. IspE subfamily.

The catalysed reaction is 4-CDP-2-C-methyl-D-erythritol + ATP = 4-CDP-2-C-methyl-D-erythritol 2-phosphate + ADP + H(+). It functions in the pathway isoprenoid biosynthesis; isopentenyl diphosphate biosynthesis via DXP pathway; isopentenyl diphosphate from 1-deoxy-D-xylulose 5-phosphate: step 3/6. Catalyzes the phosphorylation of the position 2 hydroxy group of 4-diphosphocytidyl-2C-methyl-D-erythritol. This chain is 4-diphosphocytidyl-2-C-methyl-D-erythritol kinase, found in Rhodospirillum rubrum (strain ATCC 11170 / ATH 1.1.1 / DSM 467 / LMG 4362 / NCIMB 8255 / S1).